The sequence spans 146 residues: Interleukin-3 (146 aa).

An N-terminal signal peptide occupies residues 1-17 (MSSLSILHLLLLLLSLH). The N-linked (GlcNAc...) asparagine glycan is linked to Asn65.

This sequence belongs to the IL-3 family. Monomer. As to expression, activated T-cells, mast cells, natural killer cells.

Its subcellular location is the secreted. Functionally, granulocyte/macrophage colony-stimulating factors are cytokines that act in hematopoiesis by controlling the production, differentiation, and function of 2 related white cell populations of the blood, the granulocytes and the monocytes-macrophages. This CSF induces granulocytes, macrophages, mast cells, stem cells, erythroid cells, eosinophils and megakaryocytes. This is Interleukin-3 (IL3) from Ovis aries (Sheep).